We begin with the raw amino-acid sequence, 151 residues long: NPC intracellular cholesterol transporter 2 (151 aa).

Residues 1-19 form the signal peptide; it reads MRFLAATFLLLALSTAAQA. 3 disulfides stabilise this stretch: cysteine 27-cysteine 140, cysteine 42-cysteine 47, and cysteine 93-cysteine 99. N-linked (GlcNAc...) asparagine glycosylation occurs at asparagine 58. The residue at position 116 (lysine 116) is an N6-acetyllysine. N-linked (GlcNAc...) asparagine glycosylation occurs at asparagine 135.

This sequence belongs to the NPC2 family. Interacts with NPC1 (via the second lumenal domain) in a cholestrol-dependent manner. Interacts with NUS1/NgBR, the interaction stabilizes NCP2 and regulates cholesterol trafficking. Interacts with DHDDS. Interacts with NEDD4L (via C2 domain). Interacts with NPC1L1. As to expression, detected in gallbladder bile. Detected in fibroblasts, kidney, liver, spleen, small intestine, placenta and testis (at protein level). Epididymis.

The protein localises to the secreted. It is found in the endoplasmic reticulum. The protein resides in the lysosome. It carries out the reaction cholesterol(in) = cholesterol(out). Its function is as follows. Intracellular cholesterol transporter which acts in concert with NPC1 and plays an important role in the egress of cholesterol from the lysosomal compartment. Unesterified cholesterol that has been released from LDLs in the lumen of the late endosomes/lysosomes is transferred by NPC2 to the cholesterol-binding pocket in the N-terminal domain of NPC1. May bind and mobilize cholesterol that is associated with membranes. NPC2 binds cholesterol with a 1:1 stoichiometry. Can bind a variety of sterols, including lathosterol, desmosterol and the plant sterols stigmasterol and beta-sitosterol. The secreted form of NCP2 regulates biliary cholesterol secretion via stimulation of ABCG5/ABCG8-mediated cholesterol transport. This is NPC intracellular cholesterol transporter 2 from Homo sapiens (Human).